The primary structure comprises 493 residues: Cysteine--tRNA ligase (493 aa).

Zn(2+) is bound at residue cysteine 29. Residues 31–41 (ATVQSEPHIGH) carry the 'HIGH' region motif. Positions 214, 239, and 243 each coordinate Zn(2+). The 'KMSKS' region motif lies at 270–274 (KMSKS). Lysine 273 lines the ATP pocket.

The protein belongs to the class-I aminoacyl-tRNA synthetase family. Monomer. Requires Zn(2+) as cofactor.

It localises to the cytoplasm. It catalyses the reaction tRNA(Cys) + L-cysteine + ATP = L-cysteinyl-tRNA(Cys) + AMP + diphosphate. In Renibacterium salmoninarum (strain ATCC 33209 / DSM 20767 / JCM 11484 / NBRC 15589 / NCIMB 2235), this protein is Cysteine--tRNA ligase.